The chain runs to 161 residues: Ribosome maturation factor RimP (161 aa).

It belongs to the RimP family.

The protein resides in the cytoplasm. Required for maturation of 30S ribosomal subunits. The protein is Ribosome maturation factor RimP of Janthinobacterium sp. (strain Marseille) (Minibacterium massiliensis).